Consider the following 474-residue polypeptide: Trehalose-6-phosphate synthase (474 aa).

Arg10 lines the D-glucose 6-phosphate pocket. 22-23 (GG) provides a ligand contact to UDP-alpha-D-glucose. Residues Tyr77 and Asp131 each coordinate D-glucose 6-phosphate. Arg263 and Lys268 together coordinate UDP-alpha-D-glucose. Residue Arg301 coordinates D-glucose 6-phosphate. Residues Phe340 and 366 to 370 (LVAKE) contribute to the UDP-alpha-D-glucose site.

It belongs to the glycosyltransferase 20 family. Homotetramer.

The catalysed reaction is D-glucose 6-phosphate + UDP-alpha-D-glucose = alpha,alpha-trehalose 6-phosphate + UDP + H(+). It functions in the pathway glycan biosynthesis; trehalose biosynthesis. Functionally, probably involved in the osmoprotection via the biosynthesis of trehalose. Catalyzes the transfer of glucose from UDP-alpha-D-glucose (UDP-Glc) to D-glucose 6-phosphate (Glc-6-P) to form trehalose-6-phosphate. Acts with retention of the anomeric configuration of the UDP-sugar donor. This chain is Trehalose-6-phosphate synthase, found in Cronobacter sakazakii (strain ATCC BAA-894) (Enterobacter sakazakii).